The chain runs to 218 residues: Histone H1 (218 aa).

Residues 1-19 (MSETAPVAAPAVSAPGAKA) are compositionally biased toward low complexity. Disordered stretches follow at residues 1 to 42 (MSET…PSVT) and 89 to 218 (VSKG…TKKK). At Ser-2 the chain carries N-acetylserine. The H15 domain maps to 37 to 110 (AGPSVTELIT…GASGSFKLNK (74 aa)). Composition is skewed to basic residues over residues 118 to 133 (KATK…KPAA), 141 to 158 (KKPK…KAKK), 166 to 184 (KAAK…KKTA), and 191 to 218 (KAVK…TKKK).

This sequence belongs to the histone H1/H5 family.

Its subcellular location is the nucleus. It is found in the chromosome. Its function is as follows. Histones H1 are necessary for the condensation of nucleosome chains into higher-order structures. In Gallus gallus (Chicken), this protein is Histone H1.